We begin with the raw amino-acid sequence, 421 residues long: 4-hydroxy-3-methylbut-2-en-1-yl diphosphate synthase (flavodoxin) (421 aa).

C298, C301, C344, and E351 together coordinate [4Fe-4S] cluster.

The protein belongs to the IspG family. [4Fe-4S] cluster serves as cofactor.

It carries out the reaction (2E)-4-hydroxy-3-methylbut-2-enyl diphosphate + oxidized [flavodoxin] + H2O + 2 H(+) = 2-C-methyl-D-erythritol 2,4-cyclic diphosphate + reduced [flavodoxin]. Its pathway is isoprenoid biosynthesis; isopentenyl diphosphate biosynthesis via DXP pathway; isopentenyl diphosphate from 1-deoxy-D-xylulose 5-phosphate: step 5/6. Functionally, converts 2C-methyl-D-erythritol 2,4-cyclodiphosphate (ME-2,4cPP) into 1-hydroxy-2-methyl-2-(E)-butenyl 4-diphosphate. The chain is 4-hydroxy-3-methylbut-2-en-1-yl diphosphate synthase (flavodoxin) from Neisseria meningitidis serogroup C (strain 053442).